The primary structure comprises 345 residues: L-threonine 3-dehydrogenase (345 aa).

C39 serves as a coordination point for Zn(2+). Catalysis depends on charge relay system residues T41 and H44. Zn(2+)-binding residues include H64, E65, C94, C97, C100, and C108. NAD(+) is bound by residues I176, D196, R201, 263 to 265, and 287 to 288; these read LGI and VY.

This sequence belongs to the zinc-containing alcohol dehydrogenase family. In terms of assembly, homotetramer. Requires Zn(2+) as cofactor.

It is found in the cytoplasm. It catalyses the reaction L-threonine + NAD(+) = (2S)-2-amino-3-oxobutanoate + NADH + H(+). Its pathway is amino-acid degradation; L-threonine degradation via oxydo-reductase pathway; glycine from L-threonine: step 1/2. Its function is as follows. Catalyzes the NAD(+)-dependent oxidation of L-threonine to 2-amino-3-ketobutyrate. This chain is L-threonine 3-dehydrogenase, found in Anaeromyxobacter sp. (strain K).